The sequence spans 220 residues: Ribosomal RNA large subunit methyltransferase E (220 aa).

The S-adenosyl-L-methionine site is built by Gly60, Trp62, Asp92, Asp108, and Asp133. Residue Lys173 is the Proton acceptor of the active site. Residues 195–220 (APRKPKASRDKSSETFILGRHLKQPR) are disordered.

This sequence belongs to the class I-like SAM-binding methyltransferase superfamily. RNA methyltransferase RlmE family.

It localises to the cytoplasm. It carries out the reaction uridine(2552) in 23S rRNA + S-adenosyl-L-methionine = 2'-O-methyluridine(2552) in 23S rRNA + S-adenosyl-L-homocysteine + H(+). In terms of biological role, specifically methylates the uridine in position 2552 of 23S rRNA at the 2'-O position of the ribose in the fully assembled 50S ribosomal subunit. This is Ribosomal RNA large subunit methyltransferase E from Burkholderia pseudomallei (strain 1710b).